The following is a 352-amino-acid chain: Plant intracellular Ras-group-related LRR protein 1 (352 aa).

The tract at residues 1–25 (MREMGEKRRRGHLNPAGFAGGLHDH) is disordered. LRR repeat units follow at residues 29 to 52 (KNEEHKLDMSGMSMDALPHLTMSL), 53 to 75 (GQVTILDLSNNNLESIPESIIAR), 77 to 99 (LNVVVLDVRSNQLKSLPNSIGCL), 100 to 122 (SKLKVLNVSGNLLESLPNTIEEC), 124 to 146 (ALEELHANFNELTKLPDTLGFEL), 147 to 169 (HSLRKLSVNSNKLAQLPSSTSHM), 171 to 192 (ALRALDARLNCLRALPDGLENL), 195 to 217 (LEALNVSQNFQFLRELPYAVGLL), 218 to 241 (ASLRELDVSYNSIAALPDSMGCLT), and 243 to 263 (LARFSAVGNPLVSPPMDVVEQ). Positions 264 to 271 (GLDAMRAY) match the GVYW; degenerate motif.

The protein belongs to the SHOC2 family. Widely expressed but at a lower level in seedlings and stems.

Its function is as follows. Leucine-rich repeat protein that likely mediates protein interactions, possibly in the context of signal transduction. This chain is Plant intracellular Ras-group-related LRR protein 1 (IRL1), found in Oryza sativa subsp. japonica (Rice).